The following is a 208-amino-acid chain: uncharacterized protein (208 aa).

Disordered stretches follow at residues 91–115, 127–156, and 182–208; these read PGQAGSQEAADGKGRLPDITSPSQD, QSWSSGTSRPTCLAYRPRHLSPSSKPKRPG, and NKLGSSDDSDTDRFSSVTSGSSRRKFK. Residues 127 to 136 are compositionally biased toward polar residues; that stretch reads QSWSSGTSRP.

This is an uncharacterized protein from Rattus norvegicus (Rat).